The chain runs to 132 residues: Small ribosomal subunit protein uS8 (132 aa).

Belongs to the universal ribosomal protein uS8 family. In terms of assembly, part of the 30S ribosomal subunit. Contacts proteins S5 and S12.

Its function is as follows. One of the primary rRNA binding proteins, it binds directly to 16S rRNA central domain where it helps coordinate assembly of the platform of the 30S subunit. The sequence is that of Small ribosomal subunit protein uS8 from Rickettsia conorii (strain ATCC VR-613 / Malish 7).